The following is a 1483-amino-acid chain: Guanylyl cyclase, membrane (1483 aa).

A run of 6 helical transmembrane segments spans residues 50 to 70 (ISII…YISP), 143 to 163 (FILR…TFTA), 168 to 188 (LWKL…LIFE), 198 to 218 (MVLL…PSML), 219 to 239 (ASGG…QIAG), and 242 to 262 (MVLL…ISRF). Positions 323-376 (KKDEESNLTGKKQSKVVVSPPPPPTAAAPQQQDNEISTPQNSRKIVDPQSPSSL) are disordered. Residues 355 to 376 (DNEISTPQNSRKIVDPQSPSSL) are compositionally biased toward polar residues. One can recognise a Guanylate cyclase 1 domain in the interval 395 to 517 (TVLFCEIVNF…DTINTSSRMA (123 aa)). Disordered stretches follow at residues 598–619 (NNTI…THPN) and 672–838 (LTSP…GDDF). Residues 610 to 619 (GSATGPTHPN) are compositionally biased toward polar residues. Low complexity-rich tracts occupy residues 672–684 (LTSP…PQQS), 693–712 (SPRL…SSST), and 720–765 (NNNN…NNNN). The segment covering 772–786 (SPISQNTTPTGSLSL) has biased composition (polar residues). The next 6 membrane-spanning stretches (helical) occupy residues 907–927 (ILAS…VDYF), 982–1002 (IITG…YVVS), 1016–1036 (VVMV…SVPP), 1040–1060 (IPLD…CYNF), 1061–1081 (SGIK…FIEI), and 1094–1114 (IYLS…ITSY). Residues 1168-1296 (TIFLSDIVGF…ESVQITQQME (129 aa)) enclose the Guanylate cyclase 2 domain. Mg(2+) contacts are provided by D1173, I1174, and D1217. 2 disordered regions span residues 1348-1369 (QPEV…SLQY) and 1393-1483 (NQND…SESS). The span at 1354–1369 (RSVSVSKSNFGGSLQY) shows a compositional bias: polar residues. The segment covering 1405-1416 (NENGNESSSSNI) has biased composition (low complexity). Residues 1432-1444 (NEDDESSYEDDQE) show a composition bias toward acidic residues. Over residues 1446–1465 (NQYLNNSENNKNNNNNSNQI) the composition is skewed to low complexity.

Belongs to the adenylyl cyclase class-4/guanylyl cyclase family. In terms of assembly, homodimer. The cofactor is Mg(2+).

It is found in the membrane. The catalysed reaction is GTP = 3',5'-cyclic GMP + diphosphate. Its activity is regulated as follows. Activated by guanosine 5'-3-O-(thio)triphosphate (GTPgammaS). Inhibited by calcium. Functionally, synthesizes cyclic GMP (cGMP) from GTP, after activation by heterotrimeric or monomeric G proteins. Involved in chemotaxis. The chain is Guanylyl cyclase, membrane (gca) from Dictyostelium discoideum (Social amoeba).